We begin with the raw amino-acid sequence, 488 residues long: Dipeptide and tripeptide permease A (488 aa).

Residues 1–35 (MSTANTPEDEQKPSLNAFKQPRAFYLIFSIELWER) lie on the Cytoplasmic side of the membrane. The chain crosses the membrane as a helical span at residues 36–56 (FGYYGLQGIMAVYLVKMLGMS). Topologically, residues 57 to 60 (EAEA) are periplasmic. Residues 61–81 (ITVFAAFTALVYGFVAIGGWL) traverse the membrane as a helical segment. At 82–90 (GDKILGTKR) the chain is on the cytoplasmic side. A helical membrane pass occupies residues 91–111 (VIVLGAIVLAIGYAMVAFSDH). Residues 112–114 (DKD) are Periplasmic-facing. The helical transmembrane segment at 115-135 (MIYWGLATIAVGNGLFKANPS) threads the bilayer. Topologically, residues 136–154 (SLLATCYEKDDPQLDGAFT) are cytoplasmic. The helical transmembrane segment at 155-175 (MYYMSINVGSFLSMLATPWLA) threads the bilayer. The Periplasmic portion of the chain corresponds to 176–179 (ANYG). Residues 180 to 200 (WDVAFALSVVGMLITLANFML) traverse the membrane as a helical segment. The Cytoplasmic segment spans residues 201–219 (CRGWIKDKGSRPDFEPLNY). The helical transmembrane segment at 220–240 (LKLLLTLVGIVALTAVSTWLL) threads the bilayer. A topological domain (periplasmic) is located at residue histidine 241. The chain crosses the membrane as a helical span at residues 242–262 (NNEVATWSLAIISLGIILIFA). The Cytoplasmic segment spans residues 263 to 275 (RETFMMKGVARRK). A helical membrane pass occupies residues 276 to 296 (MIVAFLLMVEAVVFFVLYDQM). The Periplasmic segment spans residues 297–324 (PTSLNFFAIHNVEHAILGFSVEPEQFQS). Residues 325-345 (LNPFWIMLASPLLAAIYNFMG) form a helical membrane-spanning segment. Residues 346–353 (DKLPMPYK) are Cytoplasmic-facing. The helical transmembrane segment at 354-374 (FTVGMFLSATAFLVLPLGASM) threads the bilayer. Residues 375–391 (ANEAGIVSSWWLVASYG) lie on the Periplasmic side of the membrane. Residues 392 to 412 (FQSIGELMISGLGLAMVAQLV) form a helical membrane-spanning segment. Over 413–415 (PQR) the chain is Cytoplasmic. A helical transmembrane segment spans residues 416–436 (LMGFIMGAWFLTSAAAAIIAG). Topologically, residues 437–460 (KVASLMAVPEDVQNAHASLEIYSS) are periplasmic. Residues 461-481 (VFLQIGIVTGVIALLMLFTAP) form a helical membrane-spanning segment. Topologically, residues 482–488 (MLSKMTQ) are cytoplasmic.

This sequence belongs to the major facilitator superfamily. Proton-dependent oligopeptide transporter (POT/PTR) (TC 2.A.17) family. DtpA subfamily.

Its subcellular location is the cell inner membrane. In terms of biological role, proton-dependent permease that transports di- and tripeptides. This chain is Dipeptide and tripeptide permease A, found in Proteus mirabilis (strain HI4320).